Reading from the N-terminus, the 206-residue chain is tRNA(Phe) 7-((3-amino-3-carboxypropyl)-4-demethylwyosine(37)-N(4))-methyltransferase 2 (206 aa).

This sequence belongs to the TYW3 family.

It catalyses the reaction 4-demethyl-7-[(3S)-3-amino-3-carboxypropyl]wyosine(37) in tRNA(Phe) + S-adenosyl-L-methionine = 7-[(3S)-3-amino-3-carboxypropyl]wyosine(37) in tRNA(Phe) + S-adenosyl-L-homocysteine + H(+). Its function is as follows. S-adenosyl-L-methionine-dependent methyltransferase that acts as a component of the wyosine derivatives biosynthesis pathway. Probably methylates N-4 position of wybutosine-86 to produce wybutosine-72. In Pyrococcus furiosus (strain ATCC 43587 / DSM 3638 / JCM 8422 / Vc1), this protein is tRNA(Phe) 7-((3-amino-3-carboxypropyl)-4-demethylwyosine(37)-N(4))-methyltransferase 2.